The sequence spans 135 residues: Small ribosomal subunit protein bS16 (135 aa).

Residues 82-135 (RPAETVGKAKQAAKREADAKQAAKEAAEAKAAAADEKAAEAEASDSAESESTEG) are disordered. Positions 94-121 (AKREADAKQAAKEAAEAKAAAADEKAAE) are enriched in basic and acidic residues. Acidic residues predominate over residues 123–135 (EASDSAESESTEG).

The protein belongs to the bacterial ribosomal protein bS16 family.

The chain is Small ribosomal subunit protein bS16 from Synechococcus sp. (strain CC9605).